A 343-amino-acid polypeptide reads, in one-letter code: Dihydroorotate dehydrogenase (quinone) (343 aa).

Residues 65-69 (AGFDK) and Thr-89 each bind FMN. Lys-69 contacts substrate. Residue 114 to 118 (NRMGF) participates in substrate binding. Residues Asn-145 and Asn-178 each coordinate FMN. Substrate is bound at residue Asn-178. Ser-181 acts as the Nucleophile in catalysis. Asn-183 is a substrate binding site. FMN is bound by residues Lys-215 and Thr-243. Residue 244 to 245 (NT) coordinates substrate. Residues Gly-269, Gly-298, and 319 to 320 (YT) each bind FMN.

Belongs to the dihydroorotate dehydrogenase family. Type 2 subfamily. In terms of assembly, monomer. The cofactor is FMN.

The protein localises to the cell membrane. It catalyses the reaction (S)-dihydroorotate + a quinone = orotate + a quinol. The protein operates within pyrimidine metabolism; UMP biosynthesis via de novo pathway; orotate from (S)-dihydroorotate (quinone route): step 1/1. Catalyzes the conversion of dihydroorotate to orotate with quinone as electron acceptor. The sequence is that of Dihydroorotate dehydrogenase (quinone) from Leifsonia xyli subsp. xyli (strain CTCB07).